The sequence spans 280 residues: Protein scylla (280 aa).

The tract at residues 39-96 (LMSKKAKTTTGGSSNGSNATATSTTTSTSSSIKHKQPAGSSNNNVGQSQSKKTKPSGS) is disordered. 2 stretches are compositionally biased toward low complexity: residues 46-69 (TTTGGSSNGSNATATSTTTSTSSS) and 77-96 (GSSNNNVGQSQSKKTKPSGS).

The protein belongs to the DDIT4 family.

The protein resides in the cytoplasm. Functionally, inhibits cell growth by regulating the Tor pathway upstream of the Tsc1-Tsc2 complex and downstream of Akt1. Acts as a cell death activator during head development. The polypeptide is Protein scylla (scyl) (Drosophila melanogaster (Fruit fly)).